The following is a 335-amino-acid chain: Galactosylgalactosylxylosylprotein 3-beta-glucuronosyltransferase 1 (335 aa).

Residues methionine 1–aspartate 6 are Cytoplasmic-facing. The essential for transport from endoplasmic reticulum to Golgi apparatus and interaction with SAR1A stretch occupies residues lysine 3–arginine 5. A helical; Signal-anchor for type II membrane protein membrane pass occupies residues isoleucine 7 to serine 27. At threonine 28–isoleucine 335 the chain is on the lumenal side. Proline 92–tyrosine 94 provides a ligand contact to UDP-alpha-D-glucuronate. Residues threonine 104 and threonine 109 each carry the phosphothreonine modification. Aspartate 123 contacts UDP-alpha-D-glucuronate. A glycan (N-linked (GlcNAc...) asparagine) is linked at asparagine 141. The UDP-alpha-D-glucuronate site is built by arginine 166 and arginine 171. A glycan (N-linked (GlcNAc...) asparagine) is linked at asparagine 185. Aspartate 196 to aspartate 198 contacts UDP-alpha-D-glucuronate. A Mn(2+)-binding site is contributed by aspartate 198. Residues phenylalanine 246 to aspartate 255 form an interaction with galactose moiety of substrate glycoprotein region. Glutamate 285 (proton donor/acceptor) is an active-site residue. Asparagine 304 carries N-linked (GlcNAc...) asparagine glycosylation. A UDP-alpha-D-glucuronate-binding site is contributed by histidine 312–arginine 314.

The protein belongs to the glycosyltransferase 43 family. In terms of assembly, homodimer. Interacts with SAR1A. It depends on Mn(2+) as a cofactor. The soluble form derives from the membrane form by proteolytic processing.

The protein localises to the golgi apparatus membrane. It is found in the secreted. It catalyses the reaction 3-O-(beta-D-galactosyl-(1-&gt;3)-beta-D-galactosyl-(1-&gt;4)-beta-D-xylosyl)-L-seryl-[protein] + UDP-alpha-D-glucuronate = 3-O-(beta-D-GlcA-(1-&gt;3)-beta-D-Gal-(1-&gt;3)-beta-D-Gal-(1-&gt;4)-beta-D-Xyl)-L-seryl-[protein] + UDP + H(+). The protein operates within protein modification; protein glycosylation. Functionally, involved in the biosynthesis of L2/HNK-1 carbohydrate epitope on glycoproteins. Can also play a role in glycosaminoglycan biosynthesis. Substrates include asialo-orosomucoid (ASOR), asialo-fetuin, and asialo-neural cell adhesion molecule. Requires sphingomyelin for activity: stearoyl-sphingomyelin was the most effective, followed by palmitoyl-sphingomyelin and lignoceroyl-sphingomyelin. Activity was demonstrated only for sphingomyelin with a saturated fatty acid and not for that with an unsaturated fatty acid, regardless of the length of the acyl group. This chain is Galactosylgalactosylxylosylprotein 3-beta-glucuronosyltransferase 1, found in Canis lupus familiaris (Dog).